A 1333-amino-acid chain; its full sequence is Cell division control protein 25 (1333 aa).

The disordered stretch occupies residues methionine 1 to glutamate 27. Positions serine 17 to glutamate 27 are enriched in basic and acidic residues. Residues lysine 30 to tyrosine 94 form the SH3 domain. Polar residues predominate over residues leucine 133–tyrosine 166. Disordered stretches follow at residues leucine 133–serine 206 and serine 474–phenylalanine 497. A compositionally biased stretch (low complexity) spans threonine 167–asparagine 176. Polar residues-rich tracts occupy residues serine 177 to serine 187 and valine 194 to serine 206. Residues serine 474–serine 485 show a composition bias toward low complexity. One can recognise an N-terminal Ras-GEF domain in the interval valine 900 to arginine 1034. Positions aspartate 1068–arginine 1305 constitute a Ras-GEF domain.

Functionally, promotes the exchange of Ras-bound GDP by GTP. This protein positively controls the level of cellular cAMP at start, the stage at which the yeast cell division cycle is triggered. This is Cell division control protein 25 (CDC25) from Candida albicans (strain SC5314 / ATCC MYA-2876) (Yeast).